A 347-amino-acid polypeptide reads, in one-letter code: Indole-3-glycerol phosphate lyase, chloroplastic (347 aa).

Disordered regions lie at residues 1 to 38 (MAFA…TPRR) and 64 to 89 (APPQ…RSRP). The transit peptide at 1-53 (MAFAPKTSSSSSLSSALQAAQSPPLLLRRMSSTATPRRRYDAAVVVTTTTTAR) directs the protein to the chloroplast. Residues 8 to 27 (SSSSSLSSALQAAQSPPLLL) show a composition bias toward low complexity. The segment covering 64–76 (APPQAPAPAPVPP) has biased composition (pro residues).

It belongs to the TrpA family. As to quaternary structure, tetramer of two alpha and two beta chains for the tryptophan synthase activity. Homodimer of alpha chains for the indole-3-glycerol phosphate lyase activity.

The protein localises to the plastid. It is found in the chloroplast. It carries out the reaction (1S,2R)-1-C-(indol-3-yl)glycerol 3-phosphate = indole + D-glyceraldehyde 3-phosphate. It catalyses the reaction (1S,2R)-1-C-(indol-3-yl)glycerol 3-phosphate + L-serine = D-glyceraldehyde 3-phosphate + L-tryptophan + H2O. The protein operates within secondary metabolite biosynthesis; 2,4-dihydroxy-1,4-benzoxazin-3-one biosynthesis; 2,4-dihydroxy-1,4-benzoxazin-3-one from indoleglycerol phosphate: step 1/5. Its pathway is amino-acid biosynthesis; L-tryptophan biosynthesis; L-tryptophan from chorismate: step 5/5. In terms of biological role, the alpha subunit is responsible for the aldol cleavage of indoleglycerol phosphate to indole and glyceraldehyde 3-phosphate. In bacteria, tryptophan synthase alpha (TSA) activity is almost completely dependent on formation of an active alpha2beta2 complex with tryptophan synthase beta (TSB), and indole is usually not released during tryptophan synthesis. In maize, the TSA homolog BX1 catalyzes the formation of free indole from indole-3-glycerol phosphate, independently of TSB. The chain is Indole-3-glycerol phosphate lyase, chloroplastic (BX1) from Zea mays (Maize).